Here is a 352-residue protein sequence, read N- to C-terminus: DNA polymerase IV (352 aa).

The UmuC domain maps to 6–186; sequence IIHIDMDAFY…LPLGKIPGVG (181 aa). Residues Asp10 and Asp104 each contribute to the Mg(2+) site. The active site involves Glu105.

This sequence belongs to the DNA polymerase type-Y family. Monomer. The cofactor is Mg(2+).

The protein localises to the cytoplasm. The catalysed reaction is DNA(n) + a 2'-deoxyribonucleoside 5'-triphosphate = DNA(n+1) + diphosphate. Functionally, poorly processive, error-prone DNA polymerase involved in untargeted mutagenesis. Copies undamaged DNA at stalled replication forks, which arise in vivo from mismatched or misaligned primer ends. These misaligned primers can be extended by PolIV. Exhibits no 3'-5' exonuclease (proofreading) activity. May be involved in translesional synthesis, in conjunction with the beta clamp from PolIII. The chain is DNA polymerase IV from Neisseria meningitidis serogroup A / serotype 4A (strain DSM 15465 / Z2491).